Here is a 239-residue protein sequence, read N- to C-terminus: MARTKKANDEVPTDSDSLKLKVAKQAAKLVKDEMVVGLGSGSTANLFIQELGKRIVEEELYIYGVPTSFDSRMVASTAGIPLISLDQCGEIDIAVDGADEVCKSTLSLIKGGGGCHTMEKIVDYHAKEFIVLADEGKLVDSLGDKTPVPLEVIPFAYSTILNKLLKMNTAPVIRTGSGKMGPVITDNGNMIIDVFISIDDAEETEIMLNNIPGVLENGVFSKCDKVLIGTSKKVEILKK.

Substrate-binding positions include 40 to 43, 96 to 99, and 110 to 113; these read SGST, DGAD, and KGGG. E119 serves as the catalytic Proton acceptor. K137 is a substrate binding site.

This sequence belongs to the ribose 5-phosphate isomerase family. As to quaternary structure, homodimer.

It carries out the reaction aldehydo-D-ribose 5-phosphate = D-ribulose 5-phosphate. It functions in the pathway carbohydrate degradation; pentose phosphate pathway; D-ribose 5-phosphate from D-ribulose 5-phosphate (non-oxidative stage): step 1/1. Its function is as follows. Catalyzes the reversible conversion of ribose-5-phosphate to ribulose 5-phosphate. The protein is Ribose-5-phosphate isomerase A of Methanococcus maripaludis (strain C6 / ATCC BAA-1332).